Consider the following 300-residue polypeptide: Cysteine-rich venom protein (300 aa).

Positions 1–21 (MLSTMQTVGAVLMLSIVLVAG) are cleaved as a signal peptide. Residues 22–24 (RKR) constitute a propeptide that is removed on maturation. The region spanning 62 to 183 (LEMHNKIRAD…GNNKYFVCNY (122 aa)) is the SCP domain.

Post-translationally, contains 11 disulfide bonds. In terms of tissue distribution, expressed by the venom duct.

The protein resides in the secreted. Protease responsible for cleaving the conotoxins from their propeptide precursors. The target propeptide requires minimum four residues including a leucine N-terminal of the cleavage site for efficient substrate processing (example: Xaa-Xaa-Xaa-Leu-Asn-Lys-Arg-toxin). The sequence is that of Cysteine-rich venom protein from Conus textile (Cloth-of-gold cone).